A 173-amino-acid chain; its full sequence is Mediator of RNA polymerase II transcription subunit 10 (173 aa).

A compositionally biased stretch (polar residues) spans 1-20 (MDPNSPMFQNTPQQPMSLQR). The disordered stretch occupies residues 1-45 (MDPNSPMFQNTPQQPMSLQRSVDDRIDRERTAKKEKDDEKKKQED). Residues 21–45 (SVDDRIDRERTAKKEKDDEKKKQED) are compositionally biased toward basic and acidic residues.

Belongs to the Mediator complex subunit 10 family. Component of the Mediator complex.

It localises to the nucleus. In terms of biological role, component of the Mediator complex, a coactivator involved in the regulated transcription of nearly all RNA polymerase II-dependent genes. Mediator functions as a bridge to convey information from gene-specific regulatory proteins to the basal RNA polymerase II transcription machinery. Mediator is recruited to promoters by direct interactions with regulatory proteins and serves as a scaffold for the assembly of a functional preinitiation complex with RNA polymerase II and the general transcription factors. The protein is Mediator of RNA polymerase II transcription subunit 10 (mdt-10) of Caenorhabditis briggsae.